A 187-amino-acid chain; its full sequence is Dihydrofolate reductase 2, mitochondrial (187 aa).

The DHFR domain occupies 4 to 185; sequence LLNCIVAVSQ…IKYKFEVCEK (182 aa). Residues Ala-10 and 16 to 22 each bind NADP(+); that span reads GIGKNGD. 31–36 provides a ligand contact to substrate; that stretch reads EFRYFQ. 55-57 lines the NADP(+) pocket; the sequence is RKT. Arg-71 contacts substrate. NADP(+) is bound by residues 77 to 79 and 117 to 124; these read SRE and GGSSVYKE.

Belongs to the dihydrofolate reductase family. Expressed in numerous cell lines.

Its subcellular location is the mitochondrion. The protein resides in the mitochondrion matrix. It localises to the mitochondrion inner membrane. The catalysed reaction is (6S)-5,6,7,8-tetrahydrofolate + NADP(+) = 7,8-dihydrofolate + NADPH + H(+). It functions in the pathway cofactor biosynthesis; tetrahydrofolate biosynthesis; 5,6,7,8-tetrahydrofolate from 7,8-dihydrofolate: step 1/1. Functionally, key enzyme in folate metabolism. Contributes to the de novo mitochondrial thymidylate biosynthesis pathway. Required to prevent uracil accumulation in mtDNA. Binds its own mRNA and that of DHFR. The sequence is that of Dihydrofolate reductase 2, mitochondrial from Homo sapiens (Human).